We begin with the raw amino-acid sequence, 625 residues long: Tumor necrosis factor receptor superfamily member 11A (625 aa).

Residues 1–30 (MAPRARRRRQLPAPLLALCVLLVPLQVTLQ) form the signal peptide. Residues 31 to 214 (VTPPCTQERH…PKEAQAYLPS (184 aa)) are Extracellular-facing. Intrachain disulfides connect Cys-35–Cys-47, Cys-48–Cys-61, Cys-51–Cys-69, Cys-72–Cys-87, Cys-93–Cys-113, Cys-115–Cys-128, Cys-125–Cys-127, Cys-134–Cys-152, and Cys-155–Cys-170. TNFR-Cys repeat units lie at residues 35–69 (CTQE…DSVC), 72–113 (CGPD…PRRC), 115–152 (CTAG…DTVC), and 155–195 (CLLG…DVVC). Asn-106 is a glycosylation site (N-linked (GlcNAc...) asparagine). The Na(+) site is built by Cys-134, Ala-135, Phe-138, Ser-161, and Val-163. An N-linked (GlcNAc...) asparagine glycan is attached at Asn-175. The cysteines at positions 176 and 195 are disulfide-linked. A helical membrane pass occupies residues 215 to 234 (LIVLLLFISVVVVAAIIFGV). Residues 235–625 (YYRKGGKALT…HTQGSGQCAE (391 aa)) lie on the Cytoplasmic side of the membrane. Disordered regions lie at residues 331 to 356 (TQGD…STGS), 388 to 413 (GTES…MPVS), and 479 to 524 (SMAE…FISS). Low complexity predominate over residues 499 to 511 (SGSSPSDQPPASG). The segment covering 512–524 (NVTGNSNSTFISS) has biased composition (polar residues). The interval 532–537 (GDIIVV) is required for interaction with EEIG1 and osteoclast differentiation. A disordered region spans residues 542–625 (TSQEGPGSAE…HTQGSGQCAE (84 aa)). Over residues 543 to 558 (SQEGPGSAEPESEPVG) the composition is skewed to low complexity. Positions 561–571 (VQEETLAHRDS) are enriched in basic and acidic residues. Residue Ser-571 is modified to Phosphoserine. A compositionally biased stretch (polar residues) spans 603 to 625 (RPVQEQGGAQTSLHTQGSGQCAE).

As to quaternary structure, binds to the clefts between the subunits of the TNFSF11 ligand trimer to form a heterohexamer. Part of a complex composed of EEIG1, TNFRSF11A/RANK, PLCG2, GAB2, TEC and BTK; complex formation increases in the presence of TNFSF11/RANKL. Interacts with TRAF1, TRAF2, TRAF3, TRAF5 and TRAF6. Interacts (via cytoplasmic domain) with GAB2. Interacts (via cytoplasmic domain); with EEIG1 (via N-terminus); when in the presence of TNFSF11/RANKL. In terms of tissue distribution, ubiquitous expression with high levels in trabecular bone, thymus, small intestine, lung, brain and kidney. Weakly expressed in spleen and bone marrow.

It localises to the cell membrane. The protein localises to the membrane raft. Receptor for TNFSF11/RANKL/TRANCE/OPGL; essential for RANKL-mediated osteoclastogenesis. Its interaction with EEIG1 promotes osteoclastogenesis via facilitating the transcription of NFATC1 and activation of PLCG2. Involved in the regulation of interactions between T-cells and dendritic cells. In Mus musculus (Mouse), this protein is Tumor necrosis factor receptor superfamily member 11A (Tnfrsf11a).